Here is a 262-residue protein sequence, read N- to C-terminus: Chondroitin proteoglycan 3 (262 aa).

A signal peptide spans 1–17 (MRSSFIFALLLIGAALA). The interval 37–68 (FSGEASGEASGEASGEFSGEGSGEGSGELSPE) is disordered. The segment covering 39-53 (GEASGEASGEASGEF) has biased composition (low complexity). Asn140, Asn148, and Asn224 each carry an N-linked (GlcNAc...) asparagine glycan.

The sequence is that of Chondroitin proteoglycan 3 (cpg-3) from Caenorhabditis briggsae.